The sequence spans 305 residues: Protein MFI (305 aa).

In terms of assembly, can homodimerize. Interacts with MFF; the interaction inhibits MFF interaction with DNM1L.

It localises to the cytoplasm. The protein resides in the cytosol. Its subcellular location is the mitochondrion outer membrane. Functionally, acts as an inhibitor of mitochondrial fission. Interacts with MFF and prevents DNM1L recruitment to mitochondria, promoting a more fused mitochondrial network. In Rattus norvegicus (Rat), this protein is Protein MFI.